A 383-amino-acid polypeptide reads, in one-letter code: 8-amino-7-oxononanoate synthase (383 aa).

R22 is a binding site for substrate. 109–110 (GF) contributes to the pyridoxal 5'-phosphate binding site. Residue H134 participates in substrate binding. The pyridoxal 5'-phosphate site is built by S178, H206, and T232. K235 is modified (N6-(pyridoxal phosphate)lysine). T348 serves as a coordination point for substrate.

It belongs to the class-II pyridoxal-phosphate-dependent aminotransferase family. BioF subfamily. In terms of assembly, homodimer. Pyridoxal 5'-phosphate is required as a cofactor.

It carries out the reaction 6-carboxyhexanoyl-[ACP] + L-alanine + H(+) = (8S)-8-amino-7-oxononanoate + holo-[ACP] + CO2. Its pathway is cofactor biosynthesis; biotin biosynthesis. In terms of biological role, catalyzes the decarboxylative condensation of pimeloyl-[acyl-carrier protein] and L-alanine to produce 8-amino-7-oxononanoate (AON), [acyl-carrier protein], and carbon dioxide. The polypeptide is 8-amino-7-oxononanoate synthase (Vibrio campbellii (strain ATCC BAA-1116)).